The sequence spans 1088 residues: RNA-directed RNA polymerase (1088 aa).

In terms of domain architecture, RdRp catalytic spans 501–687 (LSYGDVTRFL…AKRYIAGGKI (187 aa)).

This sequence belongs to the reoviridae RNA-directed RNA polymerase family. Interacts with VP3 (Potential). Interacts with VP2; this interaction activates VP1. Interacts with NSP5; this interaction is probably necessary for the formation of functional virus factories. Interacts with NSP2; this interaction is weak. It depends on Mg(2+) as a cofactor.

The protein localises to the virion. The enzyme catalyses RNA(n) + a ribonucleoside 5'-triphosphate = RNA(n+1) + diphosphate. RNA-directed RNA polymerase that is involved in both transcription and genome replication. Together with VP3 capping enzyme, forms an enzyme complex positioned near the channels situated at each of the five-fold vertices of the core. Following infection, the outermost layer of the virus is lost, leaving a double-layered particle (DLP) made up of the core and VP6 shell. VP1 then catalyzes the transcription of fully conservative plus-strand genomic RNAs that are extruded through the DLP's channels into the cytoplasm where they function as mRNAs for translation of viral proteins. One copy of each of the viral (+)RNAs is also recruited during core assembly, together with newly synthesized polymerase complexes and VP2. The polymerase of these novo-formed particles catalyzes the synthesis of complementary minus-strands leading to dsRNA formation. To do so, the polymerase specifically recognizes and binds 4 bases 5'-UGUG-3' in the conserved 3'-sequence of plus-strand RNA templates. VP2 presumably activates the autoinhibited VP1-RNA complex to coordinate packaging and genome replication. Once dsRNA synthesis is complete, the polymerase switches to the transcriptional mode, thus providing secondary transcription. This Bos taurus (Bovine) protein is RNA-directed RNA polymerase.